Consider the following 213-residue polypeptide: Ras-related protein Rab-4B (213 aa).

The residue at position 2 (alanine 2) is an N-acetylalanine. Positions 18, 19, 20, 21, 22, and 23 each coordinate GDP. Residues glycine 18, threonine 19, glycine 20, lysine 21, serine 22, cysteine 23, serine 37, histidine 39, and threonine 40 each coordinate GTP. Serine 22 is a Mg(2+) binding site. The short motif at 39–44 is the Switch 1 element; it reads HTIGVE. Mg(2+) contacts are provided by threonine 40 and aspartate 63. Residues 65–74 carry the Switch 2 motif; sequence AGQERFRSVT. Residue glycine 66 participates in GTP binding. At glutamine 67 the chain carries 5-glutamyl serotonin. Residues asparagine 121, lysine 122, aspartate 124, alanine 152, and leucine 153 each contribute to the GDP site. Residues asparagine 121, lysine 122, aspartate 124, alanine 152, and leucine 153 each contribute to the GTP site. 2 positions are modified to phosphoserine: serine 185 and serine 193. Residues cysteine 211 and cysteine 213 are each lipidated (S-geranylgeranyl cysteine). Cysteine 213 carries the post-translational modification Cysteine methyl ester.

It belongs to the small GTPase superfamily. Rab family. As to quaternary structure, interacts (GTP-bound form) with RUFY1; the interaction allows endosomal tethering and fusion. It depends on Mg(2+) as a cofactor. In terms of processing, serotonylation of Gln-67 by TGM2 during activation and aggregation of platelets leads to constitutive activation of GTPase activity.

It is found in the cell membrane. Its subcellular location is the early endosome membrane. The catalysed reaction is GTP + H2O = GDP + phosphate + H(+). With respect to regulation, regulated by guanine nucleotide exchange factors (GEFs) which promote the exchange of bound GDP for free GTP. Regulated by GTPase activating proteins (GAPs) which increase the GTP hydrolysis activity. Inhibited by GDP dissociation inhibitors (GDIs). In terms of biological role, the small GTPases Rab are key regulators of intracellular membrane trafficking, from the formation of transport vesicles to their fusion with membranes. Rabs cycle between an inactive GDP-bound form and an active GTP-bound form that is able to recruit to membranes different set of downstream effectors directly responsible for vesicle formation, movement, tethering and fusion. RAB4B mediates endosomal tethering and fusion through the interaction with RUFY1 and RAB14. Acts as a regulator of platelet alpha-granule release during activation and aggregation of platelets. This chain is Ras-related protein Rab-4B, found in Mus musculus (Mouse).